A 262-amino-acid polypeptide reads, in one-letter code: Shikimate dehydrogenase (NADP(+)) (262 aa).

Shikimate-binding positions include 15–17 (SRS) and T62. K66 serves as the catalytic Proton acceptor. Residue E78 coordinates NADP(+). Positions 87 and 102 each coordinate shikimate. Residues 126–130 (GAGGA), 150–155 (NRTLAR), and M214 contribute to the NADP(+) site. Y216 lines the shikimate pocket. G236 lines the NADP(+) pocket.

Belongs to the shikimate dehydrogenase family. As to quaternary structure, homodimer.

The enzyme catalyses shikimate + NADP(+) = 3-dehydroshikimate + NADPH + H(+). The protein operates within metabolic intermediate biosynthesis; chorismate biosynthesis; chorismate from D-erythrose 4-phosphate and phosphoenolpyruvate: step 4/7. Functionally, involved in the biosynthesis of the chorismate, which leads to the biosynthesis of aromatic amino acids. Catalyzes the reversible NADPH linked reduction of 3-dehydroshikimate (DHSA) to yield shikimate (SA). In Acinetobacter baumannii (strain AB0057), this protein is Shikimate dehydrogenase (NADP(+)).